The chain runs to 610 residues: ABC transporter ATP-binding protein/permease wht-3 (610 aa).

An ABC transporter domain is found at 42–277; the sequence is VKTRKKLFSK…FADCGHPIPK (236 aa). Residue 74–81 coordinates ATP; sequence GASGAGKT. The next 5 membrane-spanning stretches (helical) occupy residues 396–416, 446–466, 477–497, 503–523, and 584–604; these read ALYF…MTFM, LPLF…MIGL, ILIS…LACL, LAIA…GLYG, and VIGL…ALFI.

Belongs to the ABC transporter superfamily. ABCG family. Eye pigment precursor importer (TC 3.A.1.204) subfamily.

Its subcellular location is the membrane. Functionally, required for efficient RNA interference (RNAi) of pop-1 indicating a role in the germline development. This is ABC transporter ATP-binding protein/permease wht-3 (wht-3) from Caenorhabditis elegans.